A 254-amino-acid polypeptide reads, in one-letter code: Imidazole glycerol phosphate synthase subunit HisF (254 aa).

Residues Asp11 and Asp130 contribute to the active site.

It belongs to the HisA/HisF family. Heterodimer of HisH and HisF.

It localises to the cytoplasm. The enzyme catalyses 5-[(5-phospho-1-deoxy-D-ribulos-1-ylimino)methylamino]-1-(5-phospho-beta-D-ribosyl)imidazole-4-carboxamide + L-glutamine = D-erythro-1-(imidazol-4-yl)glycerol 3-phosphate + 5-amino-1-(5-phospho-beta-D-ribosyl)imidazole-4-carboxamide + L-glutamate + H(+). It functions in the pathway amino-acid biosynthesis; L-histidine biosynthesis; L-histidine from 5-phospho-alpha-D-ribose 1-diphosphate: step 5/9. Functionally, IGPS catalyzes the conversion of PRFAR and glutamine to IGP, AICAR and glutamate. The HisF subunit catalyzes the cyclization activity that produces IGP and AICAR from PRFAR using the ammonia provided by the HisH subunit. The polypeptide is Imidazole glycerol phosphate synthase subunit HisF (Halorhodospira halophila (strain DSM 244 / SL1) (Ectothiorhodospira halophila (strain DSM 244 / SL1))).